Here is an 856-residue protein sequence, read N- to C-terminus: Glucans biosynthesis glucosyltransferase H (856 aa).

6 helical membrane-spanning segments follow: residues 144–164 (ILLV…KGIM), 198–218 (ILIM…TALM), 517–537 (VFLT…FLVL), 574–594 (LFST…ILIW), 608–628 (TLSM…RMIF), and 691–711 (IVGS…VGLG).

It belongs to the glycosyltransferase 2 family. OpgH subfamily.

The protein resides in the cell inner membrane. The protein operates within glycan metabolism; osmoregulated periplasmic glucan (OPG) biosynthesis. Involved in the biosynthesis of osmoregulated periplasmic glucans (OPGs). The sequence is that of Glucans biosynthesis glucosyltransferase H from Pseudomonas fluorescens (strain Pf0-1).